The chain runs to 325 residues: tRNA N(3)-methylcytidine methyltransferase Mettl2 (325 aa).

Residues W96 and Y100 each contribute to the S-adenosyl-L-methionine site. S-adenosyl-L-homocysteine-binding residues include Y100, H112, E138, G140, D165, D191, and I212. 4 residues coordinate S-adenosyl-L-methionine: G140, D165, D191, and I212.

The protein belongs to the methyltransferase superfamily. METL family. As to quaternary structure, interacts with Psn. As to expression, widely expressed. Expressed in ovaries, head, thorax and abdomen of adult flies, and in the CNS of third instar larvae. Isoform 2 is predominantly expressed in larvae and in adult tissues that have been tested.

Functionally, probable methyltransferase. This Drosophila melanogaster (Fruit fly) protein is tRNA N(3)-methylcytidine methyltransferase Mettl2.